Here is a 485-residue protein sequence, read N- to C-terminus: Ribulose bisphosphate carboxylase large chain (485 aa).

Positions 1-2 (MS) are excised as a propeptide. Pro-3 carries the N-acetylproline modification. Position 14 is an N6,N6,N6-trimethyllysine (Lys-14). Residues Asn-123 and Thr-173 each contribute to the substrate site. Catalysis depends on Lys-175, which acts as the Proton acceptor. Substrate is bound at residue Lys-177. The Mg(2+) site is built by Lys-201, Asp-203, and Glu-204. At Lys-201 the chain carries N6-carboxylysine. His-294 acts as the Proton acceptor in catalysis. Residues Arg-295, His-327, and Ser-379 each coordinate substrate.

It belongs to the RuBisCO large chain family. Type I subfamily. Heterohexadecamer of 8 large chains and 8 small chains; disulfide-linked. The disulfide link is formed within the large subunit homodimers. The cofactor is Mg(2+). In terms of processing, the disulfide bond which can form in the large chain dimeric partners within the hexadecamer appears to be associated with oxidative stress and protein turnover.

The protein resides in the plastid. It is found in the chloroplast. It catalyses the reaction 2 (2R)-3-phosphoglycerate + 2 H(+) = D-ribulose 1,5-bisphosphate + CO2 + H2O. The enzyme catalyses D-ribulose 1,5-bisphosphate + O2 = 2-phosphoglycolate + (2R)-3-phosphoglycerate + 2 H(+). Its function is as follows. RuBisCO catalyzes two reactions: the carboxylation of D-ribulose 1,5-bisphosphate, the primary event in carbon dioxide fixation, as well as the oxidative fragmentation of the pentose substrate in the photorespiration process. Both reactions occur simultaneously and in competition at the same active site. This chain is Ribulose bisphosphate carboxylase large chain, found in Flaveria bidentis (Coastal plain yellowtops).